Consider the following 113-residue polypeptide: Protein FMC1 homolog (113 aa).

The interval 94–113 (SAGLVGLQLPHQPGGKGWEP) is disordered.

Belongs to the FMC1 family. Interacts with ATPAF2.

The protein localises to the mitochondrion. Its function is as follows. Plays a role in the assembly/stability of the mitochondrial membrane ATP synthase (F(1)F(0) ATP synthase or Complex V). This Rattus norvegicus (Rat) protein is Protein FMC1 homolog.